We begin with the raw amino-acid sequence, 552 residues long: Cation/acetate symporter ActP (552 aa).

A run of 14 helical transmembrane segments spans residues 5–25, 35–55, 78–98, 105–125, 151–171, 185–205, 208–228, 264–284, 305–325, 357–377, 407–427, 431–451, 466–486, and 499–519; these read FMMLFGLLTLPVLAWAADALT, IQAIVMFLLFVGGTLYITYWA, GLAIAGDYMSAASFLGISALV, GLIYSLGFLVGWPIILFLIAE, LSACGSLVVVALYLIAQMVGA, VAVILVGILMVMYVMFGGMLA, WVQIIKAVLLLFGATFMAVMV, ISALSLGLGLMFGTAGLPHIL, GFMGYFYFLTFIIGFGAILLV, FFLGFISAVAFATILAVVAGL, VSKITVLVLGVVAISLGILFE, IAFMVGLAFSIAASCNFPIII, IGGWAGLLTAVILMILGPTIW, and YDYPALFSMLVAFIGIWFFSI.

Belongs to the sodium:solute symporter (SSF) (TC 2.A.21) family.

The protein resides in the cell inner membrane. In terms of biological role, transports acetate. In Pectobacterium carotovorum subsp. carotovorum (strain PC1), this protein is Cation/acetate symporter ActP.